Consider the following 346-residue polypeptide: Uroporphyrinogen decarboxylase (346 aa).

Substrate contacts are provided by residues 26 to 30 (RQAGR), Asp-76, Tyr-153, Ser-208, and His-323.

The protein belongs to the uroporphyrinogen decarboxylase family. As to quaternary structure, homodimer.

It is found in the cytoplasm. It carries out the reaction uroporphyrinogen III + 4 H(+) = coproporphyrinogen III + 4 CO2. It participates in porphyrin-containing compound metabolism; protoporphyrin-IX biosynthesis; coproporphyrinogen-III from 5-aminolevulinate: step 4/4. Its function is as follows. Catalyzes the decarboxylation of four acetate groups of uroporphyrinogen-III to yield coproporphyrinogen-III. This is Uroporphyrinogen decarboxylase from Prochlorococcus marinus (strain AS9601).